The following is a 472-amino-acid chain: Putative diacyglycerol O-acyltransferase MT3172 (472 aa).

The active-site Proton acceptor is His-139. The disordered stretch occupies residues 217–238 (DRRVPPTFDRSAPPGPFQRGLS).

Belongs to the long-chain O-acyltransferase family.

It carries out the reaction an acyl-CoA + a 1,2-diacyl-sn-glycerol = a triacyl-sn-glycerol + CoA. It participates in glycerolipid metabolism; triacylglycerol biosynthesis. The polypeptide is Putative diacyglycerol O-acyltransferase MT3172 (Mycobacterium tuberculosis (strain CDC 1551 / Oshkosh)).